The primary structure comprises 20 residues: Citrate synthase (20 aa).

The protein belongs to the citrate synthase family. As to quaternary structure, homohexamer.

The catalysed reaction is oxaloacetate + acetyl-CoA + H2O = citrate + CoA + H(+). Its pathway is carbohydrate metabolism; tricarboxylic acid cycle; isocitrate from oxaloacetate: step 1/2. Its activity is regulated as follows. Allosterically inhibited by NADH. The polypeptide is Citrate synthase (gltA) (Streptomyces hygroscopicus).